The chain runs to 239 residues: Sugar fermentation stimulation protein homolog (239 aa).

The protein belongs to the SfsA family.

The protein is Sugar fermentation stimulation protein homolog of Maridesulfovibrio salexigens (strain ATCC 14822 / DSM 2638 / NCIMB 8403 / VKM B-1763) (Desulfovibrio salexigens).